We begin with the raw amino-acid sequence, 196 residues long: Cysteine/O-acetylserine efflux protein (196 aa).

Residues 1–21 traverse the membrane as a helical segment; sequence MTPTLISAFLTYTLITALTPG. Residues 22 to 41 are Cytoplasmic-facing; sequence PNNILALSSVTSHGLRRSLR. A helical membrane pass occupies residues 42–62; that stretch reads VLAGMSVGFIITMLICAALTF. Over 63–70 the chain is Periplasmic; that stretch reads SLVELDSR. A helical membrane pass occupies residues 71 to 91; the sequence is FTLVLGWIGAAYILWLAWQIA. At 92–114 the chain is on the cytoplasmic side; that stretch reads KSKPATGTPSVEPVGFWASLGLQ. Residues 115–135 traverse the membrane as a helical segment; it reads FVNVKIILYGITALSTFVLPV. Over 136-139 the chain is Periplasmic; it reads TREP. The chain crosses the membrane as a helical span at residues 140–160; that stretch reads VWLISVSLLLAAIGALGNLCW. The Cytoplasmic segment spans residues 161–170; that stretch reads ALAGHLFQRL. Residues 171-191 form a helical membrane-spanning segment; it reads FLLYGRQLNWMLAALLVYCAV. Residues 192–196 are Periplasmic-facing; the sequence is RIVVE.

It belongs to the Rht family.

Its subcellular location is the cell inner membrane. The catalysed reaction is O-acetyl-L-serine(in) = O-acetyl-L-serine(out). It carries out the reaction L-cysteine(in) = L-cysteine(out). Its function is as follows. Exporter of O-acetylserine (OAS) and cysteine. This chain is Cysteine/O-acetylserine efflux protein (eamB), found in Klebsiella pneumoniae subsp. pneumoniae (strain ATCC 700721 / MGH 78578).